We begin with the raw amino-acid sequence, 318 residues long: Thioredoxin reductase (318 aa).

An FAD-binding site is contributed by 36–43; sequence TGMQQGGQ. Residues cysteine 136 and cysteine 139 are joined by a disulfide bond. Position 286 to 295 (286 to 295) interacts with FAD; the sequence is DVMDHNYRQA.

Belongs to the class-II pyridine nucleotide-disulfide oxidoreductase family. In terms of assembly, homodimer. FAD is required as a cofactor.

It localises to the cytoplasm. The catalysed reaction is [thioredoxin]-dithiol + NADP(+) = [thioredoxin]-disulfide + NADPH + H(+). This chain is Thioredoxin reductase (trxB), found in Vibrio cholerae serotype O1 (strain ATCC 39315 / El Tor Inaba N16961).